Consider the following 202-residue polypeptide: Protein GrpE (202 aa).

Polar residues predominate over residues 1–14 (MENTQENPTSQNPT). The disordered stretch occupies residues 1 to 58 (MENTQENPTSQNPTPADEAARQAAEAASGEPQDQARQPAAAAGEQPAQAQPAGAEAAL). Over residues 21-58 (RQAAEAASGEPQDQARQPAAAAGEQPAQAQPAGAEAAL) the composition is skewed to low complexity.

This sequence belongs to the GrpE family. Homodimer.

The protein localises to the cytoplasm. In terms of biological role, participates actively in the response to hyperosmotic and heat shock by preventing the aggregation of stress-denatured proteins, in association with DnaK and GrpE. It is the nucleotide exchange factor for DnaK and may function as a thermosensor. Unfolded proteins bind initially to DnaJ; upon interaction with the DnaJ-bound protein, DnaK hydrolyzes its bound ATP, resulting in the formation of a stable complex. GrpE releases ADP from DnaK; ATP binding to DnaK triggers the release of the substrate protein, thus completing the reaction cycle. Several rounds of ATP-dependent interactions between DnaJ, DnaK and GrpE are required for fully efficient folding. This is Protein GrpE from Paraburkholderia phymatum (strain DSM 17167 / CIP 108236 / LMG 21445 / STM815) (Burkholderia phymatum).